A 347-amino-acid polypeptide reads, in one-letter code: Core-capsid bridging protein (347 aa).

Residues 290–320 (GYRGTTFQRRATAPSRRRGPSRRRRRRKATL) form a disordered region. A compositionally biased stretch (basic residues) spans 304-318 (SRRRGPSRRRRRRKA).

This sequence belongs to the adenoviridae core-capsid bridging protein family. As to quaternary structure, monomer. Homodimer. Exists in equilibrium between monomers and dimers in solution. Interacts with the histone-like nucleoprotein; this interactions bridge the virus core to the capsid. Interacts with core protein X; this interactions bridge the virus core to the capsid. Interacts with the endosome lysis protein VI; this interactions bridge the virus core to the capsid. Interacts with the peripentonal hexons. Interacts with host NPM1; this interaction might play a role in virus assembly.

The protein resides in the virion. Its subcellular location is the host nucleus. It localises to the host nucleolus. In terms of biological role, associates loosely with the viral DNA to form an outer shell around the nucleoprotein-DNA complex and links it with the capsid by binding the endosome lysis protein. Dissociates from the viral genome during entry. Might be involved in nuclear capsid assembly of the viral particles through its association with NPM1/nucleophosmin. The protein is Core-capsid bridging protein of Homo sapiens (Human).